We begin with the raw amino-acid sequence, 716 residues long: ATP-dependent DNA helicase DinG (716 aa).

The region spanning 17–294 (ALQEQIPDFI…TCMEQFRPKT (278 aa)) is the Helicase ATP-binding domain. 54-61 (APTGVGKT) is a binding site for ATP. Cys-120 contacts [4Fe-4S] cluster. The DEAH box signature appears at 131 to 134 (EPTQ). Residues Cys-194, Cys-199, and Cys-205 each coordinate [4Fe-4S] cluster. The DEAH box motif lies at 248 to 251 (DEGH). Residues 487–698 (ALDSPFNHCE…VFPIEQPEVP (212 aa)) form the Helicase C-terminal domain.

The protein belongs to the helicase family. DinG subfamily. Type 1 sub-subfamily. [4Fe-4S] cluster is required as a cofactor.

The enzyme catalyses Couples ATP hydrolysis with the unwinding of duplex DNA at the replication fork by translocating in the 5'-3' direction. This creates two antiparallel DNA single strands (ssDNA). The leading ssDNA polymer is the template for DNA polymerase III holoenzyme which synthesizes a continuous strand.. It carries out the reaction ATP + H2O = ADP + phosphate + H(+). In terms of biological role, DNA-dependent ATPase and 5'-3' DNA helicase. Unwinds D-loops, R-loops, forked DNA and G-quadruplex DNA. The sequence is that of ATP-dependent DNA helicase DinG from Shigella flexneri.